Reading from the N-terminus, the 321-residue chain is Ribose-phosphate pyrophosphokinase (321 aa).

ATP-binding positions include 44–46 (DGE) and 103–104 (RQ). The Mg(2+) site is built by H137 and D179. The active site involves K202. D-ribose 5-phosphate is bound by residues R204, D228, and 232-236 (DTAGT).

It belongs to the ribose-phosphate pyrophosphokinase family. Class I subfamily. In terms of assembly, homohexamer. It depends on Mg(2+) as a cofactor.

The protein resides in the cytoplasm. The catalysed reaction is D-ribose 5-phosphate + ATP = 5-phospho-alpha-D-ribose 1-diphosphate + AMP + H(+). It functions in the pathway metabolic intermediate biosynthesis; 5-phospho-alpha-D-ribose 1-diphosphate biosynthesis; 5-phospho-alpha-D-ribose 1-diphosphate from D-ribose 5-phosphate (route I): step 1/1. Involved in the biosynthesis of the central metabolite phospho-alpha-D-ribosyl-1-pyrophosphate (PRPP) via the transfer of pyrophosphoryl group from ATP to 1-hydroxyl of ribose-5-phosphate (Rib-5-P). The polypeptide is Ribose-phosphate pyrophosphokinase (Staphylococcus aureus (strain Mu50 / ATCC 700699)).